The sequence spans 876 residues: Valine--tRNA ligase (876 aa).

The 'HIGH' region motif lies at 44–54 (PNVTGKLHLGH). Positions 520 to 524 (KMSKS) match the 'KMSKS' region motif. Lysine 523 contacts ATP. Residues 805–876 (LEGLIDMDKE…VKSRIEQLKA (72 aa)) are a coiled coil.

Belongs to the class-I aminoacyl-tRNA synthetase family. ValS type 1 subfamily. As to quaternary structure, monomer.

Its subcellular location is the cytoplasm. The catalysed reaction is tRNA(Val) + L-valine + ATP = L-valyl-tRNA(Val) + AMP + diphosphate. Catalyzes the attachment of valine to tRNA(Val). As ValRS can inadvertently accommodate and process structurally similar amino acids such as threonine, to avoid such errors, it has a 'posttransfer' editing activity that hydrolyzes mischarged Thr-tRNA(Val) in a tRNA-dependent manner. This is Valine--tRNA ligase from Staphylococcus epidermidis (strain ATCC 35984 / DSM 28319 / BCRC 17069 / CCUG 31568 / BM 3577 / RP62A).